The chain runs to 156 residues: 6,7-dimethyl-8-ribityllumazine synthase (156 aa).

5-amino-6-(D-ribitylamino)uracil is bound by residues W33, 64–66, and 86–88; these read SVE and VIL. 91 to 92 contacts (2S)-2-hydroxy-3-oxobutyl phosphate; the sequence is ET. The Proton donor role is filled by H94. Residue I119 participates in 5-amino-6-(D-ribitylamino)uracil binding. R133 lines the (2S)-2-hydroxy-3-oxobutyl phosphate pocket.

The protein belongs to the DMRL synthase family.

It carries out the reaction (2S)-2-hydroxy-3-oxobutyl phosphate + 5-amino-6-(D-ribitylamino)uracil = 6,7-dimethyl-8-(1-D-ribityl)lumazine + phosphate + 2 H2O + H(+). Its pathway is cofactor biosynthesis; riboflavin biosynthesis; riboflavin from 2-hydroxy-3-oxobutyl phosphate and 5-amino-6-(D-ribitylamino)uracil: step 1/2. Catalyzes the formation of 6,7-dimethyl-8-ribityllumazine by condensation of 5-amino-6-(D-ribitylamino)uracil with 3,4-dihydroxy-2-butanone 4-phosphate. This is the penultimate step in the biosynthesis of riboflavin. The protein is 6,7-dimethyl-8-ribityllumazine synthase of Tropheryma whipplei (strain TW08/27) (Whipple's bacillus).